A 368-amino-acid chain; its full sequence is Propane 2-monooxygenase, hydroxylase component small subunit (368 aa).

The protein belongs to the TmoE/XamoE family. As to quaternary structure, the propane 2-monooxygenase multicomponent enzyme system is composed of an electron transfer component and a monooxygenase component interacting with the effector protein PrmD. The electron transfer component is composed of a reductase (PrmB), and the monooxygenase component is formed by a large subunit (PrmA) and a small subunit (PrmC). Probably requires the presence of the chaperonin-like protein PrmG to ensure a productive folding, resulting of a soluble PrmC, which leads to the active form of PrmABCD.

It carries out the reaction propane + NADH + O2 + H(+) = propan-2-ol + NAD(+) + H2O. Its function is as follows. Component of the propane 2-monooxygenase multicomponent enzyme system which is involved in the degradation of propane via the O2-dependent hydroxylation of propane. Also able to catalyze the oxidation the water contaminant N-nitrosodimethylamine (NDMA). The chain is Propane 2-monooxygenase, hydroxylase component small subunit from Rhodococcus jostii (strain RHA1).